A 420-amino-acid polypeptide reads, in one-letter code: Imidazolonepropionase (420 aa).

Histidine 77 and histidine 79 together coordinate Fe(3+). Residues histidine 77 and histidine 79 each coordinate Zn(2+). Arginine 86, tyrosine 149, and histidine 182 together coordinate 4-imidazolone-5-propanoate. Tyrosine 149 provides a ligand contact to N-formimidoyl-L-glutamate. Histidine 245 serves as a coordination point for Fe(3+). Histidine 245 contributes to the Zn(2+) binding site. Position 248 (glutamate 248) interacts with 4-imidazolone-5-propanoate. Aspartate 319 is a binding site for Fe(3+). Position 319 (aspartate 319) interacts with Zn(2+). An N-formimidoyl-L-glutamate-binding site is contributed by asparagine 321.

This sequence belongs to the metallo-dependent hydrolases superfamily. HutI family. It depends on Zn(2+) as a cofactor. Fe(3+) is required as a cofactor.

Its subcellular location is the cytoplasm. It catalyses the reaction 4-imidazolone-5-propanoate + H2O = N-formimidoyl-L-glutamate. It participates in amino-acid degradation; L-histidine degradation into L-glutamate; N-formimidoyl-L-glutamate from L-histidine: step 3/3. Its function is as follows. Catalyzes the hydrolytic cleavage of the carbon-nitrogen bond in imidazolone-5-propanoate to yield N-formimidoyl-L-glutamate. It is the third step in the universal histidine degradation pathway. The chain is Imidazolonepropionase from Haloarcula marismortui (strain ATCC 43049 / DSM 3752 / JCM 8966 / VKM B-1809) (Halobacterium marismortui).